Here is a 496-residue protein sequence, read N- to C-terminus: UDP-glycosyltransferase 73C4 (496 aa).

UDP-alpha-D-glucose is bound by residues Ser297, 357–359, 374–382, and 396–399; these read SPQ, HCGWNSTLE, and FGDQ. Residues 450–475 are disordered; that stretch reads SDDAKERRRRVKELGESAHKAVEEGG. A compositionally biased stretch (basic and acidic residues) spans 451 to 472; it reads DDAKERRRRVKELGESAHKAVE.

It belongs to the UDP-glycosyltransferase family.

This chain is UDP-glycosyltransferase 73C4 (UGT73C4), found in Arabidopsis thaliana (Mouse-ear cress).